The following is a 206-amino-acid chain: Large ribosomal subunit protein eL13x (206 aa).

The disordered stretch occupies residues 186 to 206; the sequence is NARHAGARAKRAAEAEKEEKK. Basic and acidic residues predominate over residues 196–206; the sequence is RAAEAEKEEKK.

It belongs to the eukaryotic ribosomal protein eL13 family.

This Arabidopsis thaliana (Mouse-ear cress) protein is Large ribosomal subunit protein eL13x (RPL13D).